Reading from the N-terminus, the 280-residue chain is MKINFTKMEGIGNDYVYIDATKNDIRLSPEQIQKLSDRNFGIGGDGVIFIRNSNSGEFQMDMYNSDGSSSEMCGNGVRCVGKFVYDHGLTKNQKPTIETGKGVLTLDLKTGTNGKVEMVTVDMGEPILKPSLVPIVWKGDEPVINQVIEVQGKQYHFTAVSMGNPHCVIYVDDADDFPVREIGPIIENHPFFPRRVNVEFVSIKGKDHLYQRTWERGTGETLACGTGACAVTVASILNGKTGRSVRIDLRGGTLHIEWQENGSVFMTGPAKEVFSGEVEI.

Asparagine 13 and asparagine 64 together coordinate substrate. Cysteine 73 acts as the Proton donor in catalysis. Substrate is bound by residues 74 to 75, asparagine 164, asparagine 197, and 215 to 216; these read GN and ER. Catalysis depends on cysteine 224, which acts as the Proton acceptor. 225 to 226 is a binding site for substrate; the sequence is GT.

This sequence belongs to the diaminopimelate epimerase family. As to quaternary structure, homodimer.

The protein localises to the cytoplasm. It catalyses the reaction (2S,6S)-2,6-diaminopimelate = meso-2,6-diaminopimelate. It functions in the pathway amino-acid biosynthesis; L-lysine biosynthesis via DAP pathway; DL-2,6-diaminopimelate from LL-2,6-diaminopimelate: step 1/1. Its function is as follows. Catalyzes the stereoinversion of LL-2,6-diaminopimelate (L,L-DAP) to meso-diaminopimelate (meso-DAP), a precursor of L-lysine and an essential component of the bacterial peptidoglycan. The protein is Diaminopimelate epimerase of Leptospira biflexa serovar Patoc (strain Patoc 1 / Ames).